The following is a 425-amino-acid chain: UDP-N-acetylglucosamine 1-carboxyvinyltransferase (425 aa).

Residue 22 to 23 (KN) coordinates phosphoenolpyruvate. Arg-93 is a UDP-N-acetyl-alpha-D-glucosamine binding site. The active-site Proton donor is the Cys-117. At Cys-117 the chain carries 2-(S-cysteinyl)pyruvic acid O-phosphothioketal. UDP-N-acetyl-alpha-D-glucosamine-binding positions include 122-126 (RPVDL), 162-165 (KVSV), Asp-307, and Ile-329.

The protein belongs to the EPSP synthase family. MurA subfamily.

Its subcellular location is the cytoplasm. The enzyme catalyses phosphoenolpyruvate + UDP-N-acetyl-alpha-D-glucosamine = UDP-N-acetyl-3-O-(1-carboxyvinyl)-alpha-D-glucosamine + phosphate. It functions in the pathway cell wall biogenesis; peptidoglycan biosynthesis. Its function is as follows. Cell wall formation. Adds enolpyruvyl to UDP-N-acetylglucosamine. In Pasteurella multocida (strain Pm70), this protein is UDP-N-acetylglucosamine 1-carboxyvinyltransferase.